We begin with the raw amino-acid sequence, 452 residues long: Probable multidrug resistance protein NorM (452 aa).

The next 12 helical transmembrane spans lie at 14-34 (LLHI…ITFL), 56-76 (LWTP…PIVA), 97-117 (VAAL…DLIL), 129-149 (IAKH…VYTV), 164-184 (MMIT…FIFG), 195-215 (GAGL…FFII), 244-264 (IGLP…AVTL), 284-304 (ASLL…VVGF), 319-339 (LIGI…ILLF), 360-380 (FLIY…IQGA), 392-412 (AAAF…VGTF), and 417-437 (AFGY…GLFF).

It belongs to the multi antimicrobial extrusion (MATE) (TC 2.A.66.1) family.

Its subcellular location is the cell membrane. Its function is as follows. Multidrug efflux pump. The chain is Probable multidrug resistance protein NorM (norM) from Bacillus subtilis (strain 168).